The sequence spans 176 residues: MDLSEPIHDFLLVFLGSGLILGGLGVVLLPNPIYSAFSLGLVLVCTSLFYILSNSYFVAAAQLLIYVGAINVLIIFAVMFMNGSEYYKDFHLWTVGDGITSMVCISLFISLITTISDTSWYGIIWTTRSNQIIEQDFLSNSQQIGIHLSTDFFLPFELISIILLDALIGAIAVARQ.

Helical transmembrane passes span 10–30, 32–52, 61–81, 92–112, and 152–172; these read FLLVFLGSGLILGGLGVVLLP, PIYSAFSLGLVLVCTSLFYIL, AQLLIYVGAINVLIIFAVMFM, LWTVGDGITSMVCISLFISLI, and FFLPFELISIILLDALIGAIA.

Belongs to the complex I subunit 6 family. NDH is composed of at least 16 different subunits, 5 of which are encoded in the nucleus.

It is found in the plastid. It localises to the chloroplast thylakoid membrane. The enzyme catalyses a plastoquinone + NADH + (n+1) H(+)(in) = a plastoquinol + NAD(+) + n H(+)(out). It carries out the reaction a plastoquinone + NADPH + (n+1) H(+)(in) = a plastoquinol + NADP(+) + n H(+)(out). Functionally, NDH shuttles electrons from NAD(P)H:plastoquinone, via FMN and iron-sulfur (Fe-S) centers, to quinones in the photosynthetic chain and possibly in a chloroplast respiratory chain. The immediate electron acceptor for the enzyme in this species is believed to be plastoquinone. Couples the redox reaction to proton translocation, and thus conserves the redox energy in a proton gradient. The sequence is that of NAD(P)H-quinone oxidoreductase subunit 6, chloroplastic (ndhG) from Atropa belladonna (Belladonna).